The primary structure comprises 187 residues: MDISIINEVFSTLEEKSMNVVSNFEFNLSKISTGRANPQLIKNIKVSYYEELIPLEQISNISVPEPQQLLIKPFDHNITKEIHKSLLLANLDVAIVNEGNQIRLNFPALNTQRRKELVKSLNKFTEQARVSIRLLRQESNKKIKSFKSEISEDDIKKYETKIQTINDSYIEQIDEITKRKERELMEI.

The protein belongs to the RRF family.

The protein resides in the cytoplasm. Its function is as follows. Responsible for the release of ribosomes from messenger RNA at the termination of protein biosynthesis. May increase the efficiency of translation by recycling ribosomes from one round of translation to another. The chain is Ribosome-recycling factor from Mycoplasmopsis pulmonis (strain UAB CTIP) (Mycoplasma pulmonis).